A 74-amino-acid polypeptide reads, in one-letter code: Capsid protein G8P (74 aa).

An N-terminal signal peptide occupies residues 1–23; it reads MKKSVVAKIIAGSTLVIGSSAFA. At 24 to 45 the chain is on the periplasmic side; that stretch reads ADDATSQAKAAFDSLTAQATEM. Residues 46 to 66 form a helical membrane-spanning segment; it reads SGYAWALVVLVVGATVGIKLF. Residues 67–74 lie on the Cytoplasmic side of the membrane; it reads KKFVSRAS.

The protein belongs to the inovirus capsid protein family. Homomultimerizes. There are several thousands of this protein in the phage capsid.

Its subcellular location is the virion. The protein resides in the host membrane. Its function is as follows. Self assembles to form a helical capsid wrapping up the viral genomic DNA. The capsid displays a filamentous structure with a length of 760-1950 nm and a width of 6-8 nm. The virion assembly and budding take place at the host inner membrane. The protein is Capsid protein G8P (VIII) of Escherichia coli (Bacteriophage If1).